Here is a 467-residue protein sequence, read N- to C-terminus: Neuromedin-K receptor (467 aa).

The Extracellular portion of the chain corresponds to 1-86 (MDSFAAAETW…TNQFVQPSWR (86 aa)). Asn-23, Asn-50, and Asn-75 each carry an N-linked (GlcNAc...) asparagine glycan. The chain crosses the membrane as a helical span at residues 87 to 109 (IALWSLAYGVVVAVAVFGNLIVI). Over 110 to 119 (WIILAHKRMR) the chain is Cytoplasmic. A helical transmembrane segment spans residues 120-141 (TVTNYFLVNLAFSDASMAAFNT). Over 142 to 161 (LVNFIYALHSEWYFGANYCR) the chain is Extracellular. Cys-160 and Cys-235 are joined by a disulfide. Residues 162–183 (FQNFFPITAVFASIYSMTAIAV) form a helical membrane-spanning segment. Residues 184–203 (DRYMAIIDPLKPRLSATATK) are Cytoplasmic-facing. The chain crosses the membrane as a helical span at residues 204 to 224 (IVIGSIWILAFLLALPQCLYS). At 225 to 247 (KTKVMPGRTLCYVQWPEGPKQHF) the chain is on the extracellular side. Residues 248 to 272 (IYHIIVIILVYCFPLLIMGITYTIV) traverse the membrane as a helical segment. Topologically, residues 273–301 (GITLWGGEIPGDTCDKYHEQLKAKRKVVK) are cytoplasmic. Residues 302–323 (MMIIVVVTFAICWLPYHIYFIL) traverse the membrane as a helical segment. Residues 324–336 (TAIYQQLNRWKYI) are Extracellular-facing. A helical membrane pass occupies residues 337-361 (QQVYLASFWLAMSSTMYNPIIYCCL). Topologically, residues 362–467 (NKRFRAGFKR…SPYTSMEEYS (106 aa)) are cytoplasmic. Cys-376 is lipidated: S-palmitoyl cysteine. The tract at residues 416-467 (DPSDADNTRSSRKKRATPGDPNFNGCSRRNSKSASTTSSFISSPYTSMEEYS) is disordered. Over residues 447 to 467 (KSASTTSSFISSPYTSMEEYS) the composition is skewed to low complexity.

This sequence belongs to the G-protein coupled receptor 1 family.

It is found in the cell membrane. In terms of biological role, this is a receptor for the tachykinin neuropeptide neuromedin-K (neurokinin B). It is associated with G proteins that activate a phosphatidylinositol-calcium second messenger system. This Oryctolagus cuniculus (Rabbit) protein is Neuromedin-K receptor (TACR3).